The following is a 317-amino-acid chain: Transaldolase (317 aa).

The active-site Schiff-base intermediate with substrate is Lys-132.

It belongs to the transaldolase family. Type 1 subfamily. In terms of assembly, homodimer.

Its subcellular location is the cytoplasm. The catalysed reaction is D-sedoheptulose 7-phosphate + D-glyceraldehyde 3-phosphate = D-erythrose 4-phosphate + beta-D-fructose 6-phosphate. It participates in carbohydrate degradation; pentose phosphate pathway; D-glyceraldehyde 3-phosphate and beta-D-fructose 6-phosphate from D-ribose 5-phosphate and D-xylulose 5-phosphate (non-oxidative stage): step 2/3. Its function is as follows. Transaldolase is important for the balance of metabolites in the pentose-phosphate pathway. This Yersinia pseudotuberculosis serotype O:3 (strain YPIII) protein is Transaldolase.